Reading from the N-terminus, the 504-residue chain is Histidine ammonia-lyase (504 aa).

The segment at residues 142 to 144 is a cross-link (5-imidazolinone (Ala-Gly)); the sequence is ASG. 2,3-didehydroalanine (Ser) is present on serine 143.

This sequence belongs to the PAL/histidase family. In terms of processing, contains an active site 4-methylidene-imidazol-5-one (MIO), which is formed autocatalytically by cyclization and dehydration of residues Ala-Ser-Gly.

It localises to the cytoplasm. It carries out the reaction L-histidine = trans-urocanate + NH4(+). It functions in the pathway amino-acid degradation; L-histidine degradation into L-glutamate; N-formimidoyl-L-glutamate from L-histidine: step 1/3. The polypeptide is Histidine ammonia-lyase (Staphylococcus aureus (strain MSSA476)).